The primary structure comprises 78 residues: Antitoxin VapB27 (78 aa).

Positions 1–45 (MKAVVDAAGRIVVPKPLREALGLQPGSTVEISRYGAGLHLIPTGR) constitute a SpoVT-AbrB domain.

Belongs to the VapB family. As to quaternary structure, interacts with cognate toxin VapC27 and non-cognate toxins MazF6 and VapC40. Interaction with MazF6 and MazF9 partially neutralizes the toxins.

In terms of biological role, antitoxin component of a type II toxin-antitoxin (TA) system. Cognate toxin is VapC27. Upon expression in E.coli partially counteracts the ribonuclease activity of non-cognate toxins MazF6 and MazF9. The polypeptide is Antitoxin VapB27 (vapB27) (Mycobacterium tuberculosis (strain ATCC 25618 / H37Rv)).